Consider the following 109-residue polypeptide: Small ribosomal subunit protein bS6 (109 aa).

The protein belongs to the bacterial ribosomal protein bS6 family.

Binds together with bS18 to 16S ribosomal RNA. The protein is Small ribosomal subunit protein bS6 of Anaplasma phagocytophilum (strain HZ).